We begin with the raw amino-acid sequence, 137 residues long: Phosphoribosyl-AMP cyclohydrolase (137 aa).

D84 is a binding site for Mg(2+). C85 contacts Zn(2+). The Mg(2+) site is built by D86 and D88. Positions 101 and 108 each coordinate Zn(2+).

Belongs to the PRA-CH family. Homodimer. The cofactor is Mg(2+). Zn(2+) serves as cofactor.

The protein resides in the cytoplasm. The enzyme catalyses 1-(5-phospho-beta-D-ribosyl)-5'-AMP + H2O = 1-(5-phospho-beta-D-ribosyl)-5-[(5-phospho-beta-D-ribosylamino)methylideneamino]imidazole-4-carboxamide. It participates in amino-acid biosynthesis; L-histidine biosynthesis; L-histidine from 5-phospho-alpha-D-ribose 1-diphosphate: step 3/9. Functionally, catalyzes the hydrolysis of the adenine ring of phosphoribosyl-AMP. The protein is Phosphoribosyl-AMP cyclohydrolase of Prosthecochloris aestuarii (strain DSM 271 / SK 413).